A 901-amino-acid polypeptide reads, in one-letter code: HTH-type transcriptional regulator MalT (901 aa).

Residue 39-46 (SPAGYGKT) participates in ATP binding. The HTH luxR-type domain maps to 829-894 (ELIRTSPLTQ…DAVQHAQQLL (66 aa)). The segment at residues 853-872 (NEQIAGELEVAATTIKTHIR) is a DNA-binding region (H-T-H motif).

The protein belongs to the MalT family. In terms of assembly, monomer in solution. Oligomerizes to an active state in the presence of the positive effectors ATP and maltotriose.

With respect to regulation, activated by ATP and maltotriose, which are both required for DNA binding. Functionally, positively regulates the transcription of the maltose regulon whose gene products are responsible for uptake and catabolism of malto-oligosaccharides. Specifically binds to the promoter region of its target genes, recognizing a short DNA motif called the MalT box. In Escherichia coli (strain K12 / MC4100 / BW2952), this protein is HTH-type transcriptional regulator MalT.